A 146-amino-acid chain; its full sequence is Probable gamma-secretase subunit PEN-2 (146 aa).

A disordered region spans residues M1–N26. At M1 to K61 the chain is on the lumenal side. A compositionally biased stretch (low complexity) spans P9–P19. The chain crosses the membrane as a helical span at residues F62–L82. The Cytoplasmic segment spans residues R83–S98. A helical transmembrane segment spans residues A99–G119. Residues G120 to A146 lie on the Lumenal side of the membrane.

The protein belongs to the PEN-2 family. Probable component of the gamma-secretase complex, a complex composed of a presenilin homodimer, nicastrin, APH1 and PEN2.

It localises to the membrane. In terms of biological role, probable subunit of the gamma-secretase complex, an endoprotease complex that catalyzes the intramembrane cleavage of integral membrane proteins such as Notch receptors. In Arabidopsis thaliana (Mouse-ear cress), this protein is Probable gamma-secretase subunit PEN-2.